The chain runs to 34 residues: Turripeptide OL127 (34 aa).

Post-translationally, contains 4 disulfide bonds. In terms of tissue distribution, expressed by the venom duct.

The protein resides in the secreted. Acts as a neurotoxin by inhibiting an ion channel. The polypeptide is Turripeptide OL127 (Iotyrris olangoensis (Sea snail)).